The primary structure comprises 250 residues: Electron transfer flavoprotein subunit beta (250 aa).

The protein belongs to the ETF beta-subunit/FixA family. As to quaternary structure, heterodimer of an alpha and a beta subunit. FAD is required as a cofactor. Requires AMP as cofactor.

It localises to the mitochondrion matrix. Functionally, the electron transfer flavoprotein serves as a specific electron acceptor for several dehydrogenases, including five acyl-CoA dehydrogenases, glutaryl-CoA and sarcosine dehydrogenase. It transfers the electrons to the main mitochondrial respiratory chain via ETF-ubiquinone oxidoreductase (ETF dehydrogenase). The protein is Electron transfer flavoprotein subunit beta (etfb) of Dictyostelium discoideum (Social amoeba).